Here is a 382-residue protein sequence, read N- to C-terminus: Mannitol-1-phosphate 5-dehydrogenase (382 aa).

Residue 3–14 (ALHFGAGNIGRG) coordinates NAD(+). Lys269 carries the post-translational modification N6-acetyllysine.

The protein belongs to the mannitol dehydrogenase family.

The catalysed reaction is D-mannitol 1-phosphate + NAD(+) = beta-D-fructose 6-phosphate + NADH + H(+). The chain is Mannitol-1-phosphate 5-dehydrogenase from Escherichia coli O81 (strain ED1a).